Consider the following 358-residue polypeptide: DNA primase large subunit PriL (358 aa).

Residues C234, C306, C315, and C322 each coordinate [4Fe-4S] cluster. A disordered region spans residues 335–358 (KLDDTDEEELVDWREDEGEEEADA). Over residues 338–358 (DTDEEELVDWREDEGEEEADA) the composition is skewed to acidic residues.

This sequence belongs to the eukaryotic-type primase large subunit family. As to quaternary structure, heterodimer of a small subunit (PriS) and a large subunit (PriL). Requires [4Fe-4S] cluster as cofactor.

Its function is as follows. Regulatory subunit of DNA primase, an RNA polymerase that catalyzes the synthesis of short RNA molecules used as primers for DNA polymerase during DNA replication. Stabilizes and modulates the activity of the small subunit, increasing the rate of DNA synthesis, and conferring RNA synthesis capability. The DNA polymerase activity may enable DNA primase to also catalyze primer extension after primer synthesis. May also play a role in DNA repair. The polypeptide is DNA primase large subunit PriL (Haloarcula marismortui (strain ATCC 43049 / DSM 3752 / JCM 8966 / VKM B-1809) (Halobacterium marismortui)).